The sequence spans 250 residues: tRNA (guanine-N(7)-)-methyltransferase (250 aa).

Glu-86, Glu-111, Asp-138, and Asp-161 together coordinate S-adenosyl-L-methionine. Asp-161 is a catalytic residue. Substrate is bound by residues Lys-165, Asp-197, and 229 to 232; that span reads TEFE.

Belongs to the class I-like SAM-binding methyltransferase superfamily. TrmB family.

It catalyses the reaction guanosine(46) in tRNA + S-adenosyl-L-methionine = N(7)-methylguanosine(46) in tRNA + S-adenosyl-L-homocysteine. The protein operates within tRNA modification; N(7)-methylguanine-tRNA biosynthesis. Catalyzes the formation of N(7)-methylguanine at position 46 (m7G46) in tRNA. The protein is tRNA (guanine-N(7)-)-methyltransferase of Treponema pallidum (strain Nichols).